We begin with the raw amino-acid sequence, 137 residues long: Small ribosomal subunit protein uS12 (137 aa).

A disordered region spans residues 1–57 (MPTINQLVRKPRKSKTKQSDSPVLNRGFNSKKKQFTNLNSPQKRGVCTRVGTMTPRK). Residue aspartate 102 is modified to 3-methylthioaspartic acid. Residues 118-137 (SGVDGRRQGRSLYGTKKPKN) form a disordered region.

This sequence belongs to the universal ribosomal protein uS12 family. As to quaternary structure, part of the 30S ribosomal subunit. Contacts proteins S8 and S17. May interact with IF1 in the 30S initiation complex.

Its function is as follows. With S4 and S5 plays an important role in translational accuracy. In terms of biological role, interacts with and stabilizes bases of the 16S rRNA that are involved in tRNA selection in the A site and with the mRNA backbone. Located at the interface of the 30S and 50S subunits, it traverses the body of the 30S subunit contacting proteins on the other side and probably holding the rRNA structure together. The combined cluster of proteins S8, S12 and S17 appears to hold together the shoulder and platform of the 30S subunit. The polypeptide is Small ribosomal subunit protein uS12 (Staphylococcus epidermidis (strain ATCC 12228 / FDA PCI 1200)).